The chain runs to 819 residues: NEDD4-binding protein 1 (819 aa).

Over residues 1 to 13 the composition is skewed to polar residues; that stretch reads MASGSVQSSSGNG. Residues 1–20 form a disordered region; that stretch reads MASGSVQSSSGNGRRQAAVV. Positions 80 to 164 constitute a KH-like domain; it reads KQAVRRAKEY…VQQFIALFKD (85 aa). Positions 226 to 241 are enriched in basic and acidic residues; sequence DDKAECKVNQKDEVSR. Disordered stretches follow at residues 226-247 and 666-736; these read DDKAECKVNQKDEVSRKGAGTP and KLDD…MAPR. Positions 517–669 constitute an RNase NYN domain; sequence LKHIIIDGSN…LGRYGPKLDD (153 aa). Positions 673-689 are enriched in polar residues; the sequence is KQPNNRTVHSSFPSSNE. The segment at 772–819 is coCUN; the sequence is RSPSETMQLKEALLKIFPEADQRHKINEILTAHPFMRDLNALSAMVLD.

The protein belongs to the N4BP1 family.

It is found in the cytoplasm. The protein resides in the cytosol. It localises to the nucleus. Its subcellular location is the nucleolus. The protein localises to the PML body. In terms of biological role, potent suppressor of cytokine production that acts as a regulator of innate immune signaling and inflammation. Acts as a key negative regulator of select cytokine and chemokine responses elicited by TRIF-independent Toll-like receptors (TLRs), thereby limiting inflammatory cytokine responses to minor insults. Has ribonuclease activity. This chain is NEDD4-binding protein 1, found in Xenopus tropicalis (Western clawed frog).